The chain runs to 338 residues: Anthranilate phosphoribosyltransferase (338 aa).

Residues glycine 81, 84-85, threonine 89, 91-94, 109-117, and serine 121 contribute to the 5-phospho-alpha-D-ribose 1-diphosphate site; these read GD, NIST, and KHGNRAVSS. Glycine 81 is a binding site for anthranilate. Serine 93 is a Mg(2+) binding site. Residue asparagine 112 coordinates anthranilate. Residue arginine 167 participates in anthranilate binding. 2 residues coordinate Mg(2+): aspartate 226 and glutamate 227.

This sequence belongs to the anthranilate phosphoribosyltransferase family. Homodimer. The cofactor is Mg(2+).

It carries out the reaction N-(5-phospho-beta-D-ribosyl)anthranilate + diphosphate = 5-phospho-alpha-D-ribose 1-diphosphate + anthranilate. It functions in the pathway amino-acid biosynthesis; L-tryptophan biosynthesis; L-tryptophan from chorismate: step 2/5. Functionally, catalyzes the transfer of the phosphoribosyl group of 5-phosphorylribose-1-pyrophosphate (PRPP) to anthranilate to yield N-(5'-phosphoribosyl)-anthranilate (PRA). This Myxococcus xanthus (strain DK1622) protein is Anthranilate phosphoribosyltransferase.